The chain runs to 358 residues: MSTSTATAQNLSFVLEGIHQVKFEDRPIPELKDPHDVLVNVKFTGICGSDVHYWEHGSIGQFVVKDPMVLGHESSGVISKVGSAVTGLKVGDRVAMEPGIPCRRCEPCKAGKYNLCEKMAFAATPPYDGTLAKFYVLPEDFCYKLPDNISLQEGALMEPLGVAVHIVRQASVTPGQSVIVFGAGPVGLLCCAVAKAFGAAKIIAVDIQKPRLDFAKRYAATSTFEPAKVSAVDNADRLRKENNLGVGADVVIDASGAEPSVHTGIHVLRPGGTYVQGGMGRSEIMFPIMAACTKELTFKGSFRYGSGDYKLAVGLVASGRVNVKDLITGVVEFHDAEQAFKEVKAGKGIKTLIAGIQD.

Residues Cys47, His72, and Glu73 each contribute to the Zn(2+) site. Gly182–Gly187 serves as a coordination point for NAD(+).

This sequence belongs to the zinc-containing alcohol dehydrogenase family. The cofactor is Zn(2+).

The enzyme catalyses xylitol + NAD(+) = D-xylulose + NADH + H(+). It participates in carbohydrate degradation; L-arabinose degradation via L-arabinitol; D-xylulose 5-phosphate from L-arabinose (fungal route): step 4/5. Functionally, xylitol dehydrogenase which catalyzes the conversion of xylitol to D-xylulose. Xylose is a major component of hemicelluloses such as xylan. Most fungi utilize D-xylose via three enzymatic reactions, xylose reductase (XR), xylitol dehydrogenase (XDH), and xylulokinase, to form xylulose 5-phosphate, which enters pentose phosphate pathway. The chain is Probable D-xylulose reductase A (xdhA) from Neosartorya fischeri (strain ATCC 1020 / DSM 3700 / CBS 544.65 / FGSC A1164 / JCM 1740 / NRRL 181 / WB 181) (Aspergillus fischerianus).